The chain runs to 27 residues: Palustrin-1d (27 aa).

A disulfide bond links C21 and C27.

In terms of tissue distribution, expressed by the skin glands.

It localises to the secreted. Antimicrobial activity against Gram-negative bacterium E.coli. The sequence is that of Palustrin-1d from Lithobates palustris (Pickerel frog).